The primary structure comprises 338 residues: UPF0324 membrane protein TauZ (338 aa).

Helical transmembrane passes span 36 to 55 (YGAP…NFLA), 75 to 92 (LGVA…LAAL), 96 to 118 (AIAL…SRLV), 125 to 147 (ALLT…AAVL), 162 to 184 (LSVT…LFGF), 223 to 245 (LIRV…ARGL), 255 to 277 (PLLP…GLIP), 290 to 309 (WALL…GKML), and 314 to 336 (GAIA…GLHL).

The protein belongs to the UPF0324 family.

Its subcellular location is the cell membrane. In Paracoccus pantotrophus (Thiosphaera pantotropha), this protein is UPF0324 membrane protein TauZ (tauZ).